An 816-amino-acid chain; its full sequence is Protein hunchback (816 aa).

Disordered stretches follow at residues 33 to 92, 129 to 151, 165 to 185, and 197 to 229; these read LSHH…QPMD, QQHF…GGFN, YYGG…PTAV, and ALTP…LMSN. 3 stretches are compositionally biased toward low complexity: residues 49–60, 79–89, and 129–139; these read SNSNSGASSPRQ, QQQQQQQQQQQ, and QQHFQAAQHQQ. Residue T199 is modified to Phosphothreonine. 4 positions are modified to phosphoserine: S209, S228, S230, and S231. Basic and acidic residues predominate over residues 219–229; that stretch reads EPEKEHDLMSN. C2H2-type zinc fingers lie at residues 261–283, 290–312, 318–340, and 346–364; these read YKCK…TRTH, LQCA…IRKH, FQCD…RKSH, and YRCA…FKLH. 3 disordered regions span residues 387 to 427, 536 to 612, and 679 to 734; these read VIDV…QQQQ, LQQQ…QLPH, and GSSA…SNPT. Low complexity-rich tracts occupy residues 399–427 and 536–560; these read SKSF…QQQQ and LQQQ…QQQQ. Acidic residues predominate over residues 567 to 578; that stretch reads NEEDEEEEEHED. Phosphoserine is present on residues S584 and S587. Residues 712–734 show a composition bias toward low complexity; that stretch reads SASSTASSSGNSSNASSSTSNPT. 2 consecutive C2H2-type zinc fingers follow at residues 763-785 and 791-815; these read YECK…MGYH and FKCN…RNAH.

Belongs to the hunchback C2H2-type zinc-finger protein family.

It is found in the nucleus. Functionally, gap class segmentation protein that controls development of head structures. The chain is Protein hunchback from Drosophila virilis (Fruit fly).